Here is a 177-residue protein sequence, read N- to C-terminus: Large ribosomal subunit protein uL6 (177 aa).

This sequence belongs to the universal ribosomal protein uL6 family. In terms of assembly, part of the 50S ribosomal subunit.

Functionally, this protein binds to the 23S rRNA, and is important in its secondary structure. It is located near the subunit interface in the base of the L7/L12 stalk, and near the tRNA binding site of the peptidyltransferase center. This is Large ribosomal subunit protein uL6 from Shewanella denitrificans (strain OS217 / ATCC BAA-1090 / DSM 15013).